The chain runs to 207 residues: Large ribosomal subunit protein uL4 (207 aa).

The tract at residues 44–81 is disordered; it reads KRQGTQSAKTRSEVRGGGRKPWRQKGTGRARQGSIRSP. The segment covering 60–71 has biased composition (basic residues); it reads GGRKPWRQKGTG.

Belongs to the universal ribosomal protein uL4 family. Part of the 50S ribosomal subunit.

Functionally, one of the primary rRNA binding proteins, this protein initially binds near the 5'-end of the 23S rRNA. It is important during the early stages of 50S assembly. It makes multiple contacts with different domains of the 23S rRNA in the assembled 50S subunit and ribosome. Its function is as follows. Forms part of the polypeptide exit tunnel. The sequence is that of Large ribosomal subunit protein uL4 from Finegoldia magna (strain ATCC 29328 / DSM 20472 / WAL 2508) (Peptostreptococcus magnus).